Reading from the N-terminus, the 312-residue chain is 2,3-dihydroxyphenylpropionate/2,3-dihydroxicinnamic acid 1,2-dioxygenase (312 aa).

H115 (proton donor) is an active-site residue. The active-site Proton acceptor is the H179.

The protein belongs to the LigB/MhpB extradiol dioxygenase family. Homotetramer. Fe(2+) serves as cofactor.

It carries out the reaction 3-(2,3-dihydroxyphenyl)propanoate + O2 = (2Z,4E)-2-hydroxy-6-oxonona-2,4-dienedioate + H(+). The catalysed reaction is (2E)-3-(2,3-dihydroxyphenyl)prop-2-enoate + O2 = (2Z,4E,7E)-2-hydroxy-6-oxonona-2,4,7-trienedioate + H(+). Its pathway is aromatic compound metabolism; 3-phenylpropanoate degradation. Functionally, catalyzes the non-heme iron(II)-dependent oxidative cleavage of 2,3-dihydroxyphenylpropionic acid and 2,3-dihydroxicinnamic acid into 2-hydroxy-6-ketononadienedioate and 2-hydroxy-6-ketononatrienedioate, respectively. This chain is 2,3-dihydroxyphenylpropionate/2,3-dihydroxicinnamic acid 1,2-dioxygenase, found in Azotobacter vinelandii (strain DJ / ATCC BAA-1303).